The following is a 56-amino-acid chain: Small ribosomal subunit protein uS14 (56 aa).

Zn(2+)-binding residues include Cys-21, Cys-24, Cys-39, and Cys-42.

Belongs to the universal ribosomal protein uS14 family. It depends on Zn(2+) as a cofactor.

The sequence is that of Small ribosomal subunit protein uS14 (rps29A) from Guillardia theta (Cryptophyte).